The sequence spans 158 residues: Transcription elongation factor GreA (158 aa).

The protein belongs to the GreA/GreB family.

Necessary for efficient RNA polymerase transcription elongation past template-encoded arresting sites. The arresting sites in DNA have the property of trapping a certain fraction of elongating RNA polymerases that pass through, resulting in locked ternary complexes. Cleavage of the nascent transcript by cleavage factors such as GreA or GreB allows the resumption of elongation from the new 3'terminus. GreA releases sequences of 2 to 3 nucleotides. This is Transcription elongation factor GreA from Pseudomonas syringae pv. tomato (strain ATCC BAA-871 / DC3000).